A 483-amino-acid polypeptide reads, in one-letter code: Glutamyl-tRNA(Gln) amidotransferase subunit A (483 aa).

Active-site charge relay system residues include lysine 76 and serine 151. Catalysis depends on serine 175, which acts as the Acyl-ester intermediate.

It belongs to the amidase family. GatA subfamily. In terms of assembly, heterotrimer of A, B and C subunits.

It carries out the reaction L-glutamyl-tRNA(Gln) + L-glutamine + ATP + H2O = L-glutaminyl-tRNA(Gln) + L-glutamate + ADP + phosphate + H(+). Allows the formation of correctly charged Gln-tRNA(Gln) through the transamidation of misacylated Glu-tRNA(Gln) in organisms which lack glutaminyl-tRNA synthetase. The reaction takes place in the presence of glutamine and ATP through an activated gamma-phospho-Glu-tRNA(Gln). This is Glutamyl-tRNA(Gln) amidotransferase subunit A from Pseudomonas fluorescens (strain Pf0-1).